The primary structure comprises 304 residues: MSGAERRPAAGRVQLDSKPTPTTTADGNQNITEVDAFDKRQTFDPAVQYKMNHQRRGVALIFNHEHFFWHLRLPDRRGTLADRNNLKRSLTDLGFEVRIFDDLKAEDVLKKVFEASRDDYSNADCFVCVFLSHGENDHVYAYDAQIKIETITNMFRGDKCQSLVGKPKIFIIQACRGDKHDDPVLVQDSVDSKDETTVNQTEVDAAGVYTLPAGADFIMCYSVAQGYFSHRETVNGSWYIQDLCEALGKHGSSLEFTELLTVVNRKVSHRKVDICRDINAIGKKQIPCFASMLTKKLYFHPKSK.

A disordered region spans residues 1–29 (MSGAERRPAAGRVQLDSKPTPTTTADGNQ). The propeptide occupies 1–35 (MSGAERRPAAGRVQLDSKPTPTTTADGNQNITEVD). Positions 17-29 (SKPTPTTTADGNQ) are enriched in polar residues. The segment at 54–56 (QRR) is tri-arginine exosite. H133 is an active-site residue. Residues 137-154 (DHVYAYDAQIKIETITNM) form a 130's region region. C175 is an active-site residue. Positions 192-204 (SKDETTVNQTEVD) are excised as a propeptide.

Belongs to the peptidase C14A family. As to quaternary structure, heterotetramer that consists of two anti-parallel arranged heterodimers, each one formed by a 18 kDa (p18) and a 11 kDa (p11) subunit. In terms of assembly, heterotetramer that consists of two anti-parallel arranged heterodimers, each one formed by a 18 kDa (Caspase-6 subunit p18) and a 11 kDa (Caspase-6 subunit p11) subunit. Widely expressed.

It localises to the cytoplasm. It is found in the nucleus. It carries out the reaction Strict requirement for Asp at position P1 and has a preferred cleavage sequence of Val-Glu-His-Asp-|-.. Its activity is regulated as follows. During activation, the N-terminal prodomain is removed by cleavage. Concomitantly, double cleavage gives rise to a large 18-kDa and a small 11-kDa subunit. The two large and two small subunits then assemble to form the active CASP6 complex. Intramolecular cleavage at Asp-191 is a prerequisite for CASP6 self-activation. Its function is as follows. Cysteine protease that plays essential roles in programmed cell death, development and innate immunity. Acts as a non-canonical executioner caspase during apoptosis: localizes in the nucleus and cleaves the nuclear structural protein lamin-A/LMNA thereby inducing nuclear shrinkage and fragmentation. Lamin-A/LMNA cleavage is required for chromatin condensation and nuclear disassembly during apoptotic execution. Plays an essential role in defense against viruses by acting as a central mediator of the ZBP1-mediated pyroptosis, apoptosis, and necroptosis (PANoptosis), independently of its cysteine protease activity. PANoptosis is a unique inflammatory programmed cell death, which provides a molecular scaffold that allows the interactions and activation of machinery required for inflammasome/pyroptosis, apoptosis and necroptosis. This Gallus gallus (Chicken) protein is Caspase-6.